We begin with the raw amino-acid sequence, 130 residues long: MSEIPSDLKYIETHQWVRVDADGTATVGITDFAQEQLGDVVYIGVPEMGATVNGGEEAGVAESVKSASDVFSPVTGEVIEINEKLEDEPEIVNEDPYGDGWMFKVKLADEGELEGLMDAAAYAEHVAAEE.

A Lipoyl-binding domain is found at 24-106 (TATVGITDFA…YGDGWMFKVK (83 aa)). N6-lipoyllysine is present on lysine 65.

This sequence belongs to the GcvH family. As to quaternary structure, the glycine cleavage system is composed of four proteins: P, T, L and H. It depends on (R)-lipoate as a cofactor.

Its function is as follows. The glycine cleavage system catalyzes the degradation of glycine. The H protein shuttles the methylamine group of glycine from the P protein to the T protein. The sequence is that of Glycine cleavage system H protein from Marinobacter nauticus (strain ATCC 700491 / DSM 11845 / VT8) (Marinobacter aquaeolei).